A 357-amino-acid polypeptide reads, in one-letter code: Dual-specificity RNA methyltransferase RlmN (357 aa).

The Proton acceptor role is filled by E89. Residues 109 to 340 (EGEKYTVCVS…CTIRESKALD (232 aa)) form the Radical SAM core domain. The cysteines at positions 116 and 345 are disulfide-linked. [4Fe-4S] cluster contacts are provided by C123, C127, and C130. Residues 173-174 (GE), S203, 226-228 (SLH), and N302 each bind S-adenosyl-L-methionine. The active-site S-methylcysteine intermediate is C345.

This sequence belongs to the radical SAM superfamily. RlmN family. The cofactor is [4Fe-4S] cluster.

It localises to the cytoplasm. It catalyses the reaction adenosine(2503) in 23S rRNA + 2 reduced [2Fe-2S]-[ferredoxin] + 2 S-adenosyl-L-methionine = 2-methyladenosine(2503) in 23S rRNA + 5'-deoxyadenosine + L-methionine + 2 oxidized [2Fe-2S]-[ferredoxin] + S-adenosyl-L-homocysteine. The enzyme catalyses adenosine(37) in tRNA + 2 reduced [2Fe-2S]-[ferredoxin] + 2 S-adenosyl-L-methionine = 2-methyladenosine(37) in tRNA + 5'-deoxyadenosine + L-methionine + 2 oxidized [2Fe-2S]-[ferredoxin] + S-adenosyl-L-homocysteine. Specifically methylates position 2 of adenine 2503 in 23S rRNA and position 2 of adenine 37 in tRNAs. m2A2503 modification seems to play a crucial role in the proofreading step occurring at the peptidyl transferase center and thus would serve to optimize ribosomal fidelity. The polypeptide is Dual-specificity RNA methyltransferase RlmN (Helicobacter pylori (strain J99 / ATCC 700824) (Campylobacter pylori J99)).